Consider the following 592-residue polypeptide: Arginine--tRNA ligase (592 aa).

The 'HIGH' region signature appears at proline 123 to histidine 133.

It belongs to the class-I aminoacyl-tRNA synthetase family. As to quaternary structure, monomer.

Its subcellular location is the cytoplasm. The catalysed reaction is tRNA(Arg) + L-arginine + ATP = L-arginyl-tRNA(Arg) + AMP + diphosphate. This is Arginine--tRNA ligase from Flavobacterium johnsoniae (strain ATCC 17061 / DSM 2064 / JCM 8514 / BCRC 14874 / CCUG 350202 / NBRC 14942 / NCIMB 11054 / UW101) (Cytophaga johnsonae).